A 55-amino-acid polypeptide reads, in one-letter code: Sec-independent protein translocase protein TatA (55 aa).

Residues 1 to 21 form a helical membrane-spanning segment; sequence MGMSFSHLLIVLLIIFVLFGA.

The protein belongs to the TatA/E family. In terms of assembly, the Tat system comprises two distinct complexes: a TatABC complex, containing multiple copies of TatA, TatB and TatC subunits, and a separate TatA complex, containing only TatA subunits. Substrates initially bind to the TatABC complex, which probably triggers association of the separate TatA complex to form the active translocon.

It is found in the cell inner membrane. Part of the twin-arginine translocation (Tat) system that transports large folded proteins containing a characteristic twin-arginine motif in their signal peptide across membranes. TatA could form the protein-conducting channel of the Tat system. The protein is Sec-independent protein translocase protein TatA of Rickettsia peacockii (strain Rustic).